Here is a 184-residue protein sequence, read N- to C-terminus: GTP cyclohydrolase 1 (184 aa).

Zn(2+) is bound by residues Cys75, His78, and Cys146.

It belongs to the GTP cyclohydrolase I family. As to quaternary structure, homomer.

The catalysed reaction is GTP + H2O = 7,8-dihydroneopterin 3'-triphosphate + formate + H(+). It participates in cofactor biosynthesis; 7,8-dihydroneopterin triphosphate biosynthesis; 7,8-dihydroneopterin triphosphate from GTP: step 1/1. This Finegoldia magna (strain ATCC 29328 / DSM 20472 / WAL 2508) (Peptostreptococcus magnus) protein is GTP cyclohydrolase 1.